Here is a 264-residue protein sequence, read N- to C-terminus: Short-chain dehydrogenase/reductase ucsE (264 aa).

The helical transmembrane segment at 13–32 (LVVVVGGTSGLGFAVAQAAV) threads the bilayer. Positions 23, 43, and 74 each coordinate NADP(+). An N-linked (GlcNAc...) asparagine glycan is attached at N125. Residues R130 and K139 each coordinate NADP(+). S157 serves as the catalytic Proton donor. Residues V202 and T204 each coordinate NADP(+).

It belongs to the short-chain dehydrogenases/reductases (SDR) family. Requires NADP(+) as cofactor.

Its subcellular location is the membrane. It functions in the pathway mycotoxin biosynthesis. Short-chain dehydrogenase/reductase; part of the gene cluster that mediates the biosynthesis of UCS1025A, a member of the pyrrolizidinone family that acts as a strong telomerase inhibitor and displays potent antibacterial and antitumor properties. These compounds share a hemiaminal-containing pyrrolizidinone core fused with a gamma-lactone, giving a furopyrrolizidine that is connected to a decalin fragment. The polyketide synthase module (PKS) of the PKS-NRPS ucsA is responsible for the synthesis of the polyketide backbone via the condensation of an acetyl-CoA starter unit with 6 malonyl-CoA units. The downstream nonribosomal peptide synthetase (NRPS) module then amidates the carboxyl end of the polyketide with a 2S,3S-methylproline derived from L-isoleucine by the 2-oxoglutarate-dependent dioxygenase ucsF which converts L-isoleucine to (4S,5S)-4-methylpyrroline-5-carboxylate that is further converted to 2S,3S-methylproline by the pyrroline-5-carboxylate reductase ucsG. Reductive release of the completed aminoacyl polyketide from the assembly line can form the 3-pyrrolin-2-one structure via an intramolecular Knoevenagel reaction. Because ucsA lacks a designated enoylreductase (ER) domain, the required activity is provided the enoyl reductase ucsL. This keto acyclic precursor is the substrate of the Diels-Alderase ucsH, that catalyzes the Diels-Alder cycloaddition. Oxidation of the 3S-methyl group to a carboxylate by the cytochrome P450 monooxygenase ucsK allows an oxa-Michael cyclization that might involve the reductase/dehydrogenase ucsI and which furnishes the furopyrrolizidine. The oxidase ucsJ likely plays a critical role in stereoselective reduction of the C5-C6 double bond to afford the required R-configured carboxylate group. Further enolization and oxidation at C5 by an unidentified enzyme affords the last intermediate that can undergo oxa-Michael cyclization to yield UCS1025A. This chain is Short-chain dehydrogenase/reductase ucsE, found in Acremonium sp.